The sequence spans 335 residues: MATKVVLDFEKPLVELEAKLGEMRHCLRSSSREQAPNEAEALQNEIGTLEKKVEALRQSIYKNLTRWQKVQLARHPERPYTLDYIYMITCDFVELAGDRHFSDDKAIVGGFARIEDRVSGFSQPVMVIGHQKGRDTKSNLYRNFGMAQPEGYRKALRLMKLAEKFRKPIITLIDTPGAFPGIEAEERGQAEAIARNLYEMAKLTVPVICVIIGEGASGGAIGLGVGDRILMAENSWYSVISPESCSSILWRSWNYKEQAAEALQLTAPDLLSQGIIDRIVPEPMGGAHTAPEAMAGTLKGILIEELSALLPLSSEELVNSRIEKFSSMGVWNEEG.

In terms of domain architecture, CoA carboxyltransferase C-terminal spans 48–308; sequence TLEKKVEALR…KGILIEELSA (261 aa).

It belongs to the AccA family. As to quaternary structure, acetyl-CoA carboxylase is a heterohexamer composed of biotin carboxyl carrier protein (AccB), biotin carboxylase (AccC) and two subunits each of ACCase subunit alpha (AccA) and ACCase subunit beta (AccD).

Its subcellular location is the cytoplasm. It catalyses the reaction N(6)-carboxybiotinyl-L-lysyl-[protein] + acetyl-CoA = N(6)-biotinyl-L-lysyl-[protein] + malonyl-CoA. The protein operates within lipid metabolism; malonyl-CoA biosynthesis; malonyl-CoA from acetyl-CoA: step 1/1. Component of the acetyl coenzyme A carboxylase (ACC) complex. First, biotin carboxylase catalyzes the carboxylation of biotin on its carrier protein (BCCP) and then the CO(2) group is transferred by the carboxyltransferase to acetyl-CoA to form malonyl-CoA. In Chlorobium phaeovibrioides (strain DSM 265 / 1930) (Prosthecochloris vibrioformis (strain DSM 265)), this protein is Acetyl-coenzyme A carboxylase carboxyl transferase subunit alpha.